The sequence spans 267 residues: 4-hydroxy-tetrahydrodipicolinate reductase (267 aa).

NAD(+) is bound by residues 9–14 and D35; that span reads GAGGRM. NADP(+) is bound at residue R36. Residues 99-101 and 123-126 each bind NAD(+); these read GTT and AANY. The active-site Proton donor/acceptor is H156. Position 157 (H157) interacts with (S)-2,3,4,5-tetrahydrodipicolinate. K160 functions as the Proton donor in the catalytic mechanism. Residue 166 to 167 coordinates (S)-2,3,4,5-tetrahydrodipicolinate; the sequence is GT.

It belongs to the DapB family.

The protein resides in the cytoplasm. It catalyses the reaction (S)-2,3,4,5-tetrahydrodipicolinate + NAD(+) + H2O = (2S,4S)-4-hydroxy-2,3,4,5-tetrahydrodipicolinate + NADH + H(+). It carries out the reaction (S)-2,3,4,5-tetrahydrodipicolinate + NADP(+) + H2O = (2S,4S)-4-hydroxy-2,3,4,5-tetrahydrodipicolinate + NADPH + H(+). The protein operates within amino-acid biosynthesis; L-lysine biosynthesis via DAP pathway; (S)-tetrahydrodipicolinate from L-aspartate: step 4/4. Functionally, catalyzes the conversion of 4-hydroxy-tetrahydrodipicolinate (HTPA) to tetrahydrodipicolinate. The chain is 4-hydroxy-tetrahydrodipicolinate reductase from Halorhodospira halophila (strain DSM 244 / SL1) (Ectothiorhodospira halophila (strain DSM 244 / SL1)).